Here is a 284-residue protein sequence, read N- to C-terminus: MNVFQMRDKLKARLKHLDVEFKFDREEETLRIVRIDNHKGVTIKLNAIVAKYEEQKEKIIDEICYYVEEAIAQMGDEVINNVEDIQIMPVIRATSFDKETKEGHAFVLTEHTAETNIYYALDLGKSYRLIDENMLQTLNLTAQQVKEMSLFNVRKLECRYSTDEVKGNIFYFINTNDGYDASRILNTSFLNHIQHQCEGEMLVGVPHQDVLILADIRNKTGYDVMAHLTMEFFTKGLVPITSLSFGYDNGHLEPIFILGKNNKQKRDPNVIQRLEANRKKFKKD.

It belongs to the UPF0354 family.

This chain is UPF0354 protein SERP1303, found in Staphylococcus epidermidis (strain ATCC 35984 / DSM 28319 / BCRC 17069 / CCUG 31568 / BM 3577 / RP62A).